The primary structure comprises 344 residues: NAD-dependent alcohol dehydrogenase (344 aa).

Positions 38, 66, 96, 99, 102, 110, and 152 each coordinate Zn(2+).

This sequence belongs to the zinc-containing alcohol dehydrogenase family. Homodimer and homotetramer. Requires Zn(2+) as cofactor.

It catalyses the reaction a primary alcohol + NAD(+) = an aldehyde + NADH + H(+). The enzyme catalyses a secondary alcohol + NAD(+) = a ketone + NADH + H(+). This Sulfolobus acidocaldarius (strain ATCC 33909 / DSM 639 / JCM 8929 / NBRC 15157 / NCIMB 11770) protein is NAD-dependent alcohol dehydrogenase (adh).